Reading from the N-terminus, the 276-residue chain is Small ribosomal subunit protein uS3 (276 aa).

The 72-residue stretch at I39–K110 folds into the KH type-2 domain.

This sequence belongs to the universal ribosomal protein uS3 family. In terms of assembly, part of the 30S ribosomal subunit. Forms a tight complex with proteins S10 and S14.

Its function is as follows. Binds the lower part of the 30S subunit head. Binds mRNA in the 70S ribosome, positioning it for translation. This is Small ribosomal subunit protein uS3 from Borrelia turicatae (strain 91E135).